The sequence spans 591 residues: Probable Xaa-Pro aminopeptidase PEPP (591 aa).

Residues 31–59 are disordered; it reads SIHSPPPSVSAATHGGVKNPSFSQRRTSG. Mn(2+) is bound by residues D322 and D333. Low complexity predominate over residues 441 to 450; the sequence is GLSRQAISGS. The segment at 441 to 460 is disordered; it reads GLSRQAISGSRRLPPPRNMK. 2 residues coordinate Mn(2+): E511 and E552.

The protein belongs to the peptidase M24B family. Requires Mn(2+) as cofactor.

It catalyses the reaction Release of any N-terminal amino acid, including proline, that is linked to proline, even from a dipeptide or tripeptide.. Its function is as follows. Catalyzes the removal of a penultimate prolyl residue from the N-termini of peptides. In Sordaria macrospora (strain ATCC MYA-333 / DSM 997 / K(L3346) / K-hell), this protein is Probable Xaa-Pro aminopeptidase PEPP (PEPP).